A 322-amino-acid polypeptide reads, in one-letter code: Deoxyhypusine hydroxylase (322 aa).

2 HEAT-like PBS-type repeats span residues 76–102 and 109–135; these read LKHE…VLAD and VRHE…YFKE. H78, E79, H111, E112, H236, E237, H269, and E270 together coordinate Fe cation. The HEAT-like PBS-type 3 repeat unit spans residues 267–293; it reads VRHEAAEALGSIATDDVLPVLKEHLKD.

Belongs to the deoxyhypusine hydroxylase family. Requires Fe(2+) as cofactor.

The protein localises to the cytoplasm. It localises to the nucleus. The catalysed reaction is [eIF5A protein]-deoxyhypusine + AH2 + O2 = [eIF5A protein]-hypusine + A + H2O. It functions in the pathway protein modification; eIF5A hypusination. Functionally, catalyzes the hydroxylation of the N(6)-(4-aminobutyl)-L-lysine intermediate to form hypusine, an essential post-translational modification only found in mature eIF-5A factor. In Kluyveromyces lactis (strain ATCC 8585 / CBS 2359 / DSM 70799 / NBRC 1267 / NRRL Y-1140 / WM37) (Yeast), this protein is Deoxyhypusine hydroxylase.